A 392-amino-acid chain; its full sequence is LL-diaminopimelate aminotransferase (392 aa).

Substrate-binding residues include Tyr-13 and Gly-38. Pyridoxal 5'-phosphate contacts are provided by residues Tyr-67, 102–103 (SK), Tyr-127, Asn-177, Tyr-208, and 236–238 (SCS). Residues Lys-103, Tyr-127, and Asn-177 each contribute to the substrate site. Residue Lys-239 is modified to N6-(pyridoxal phosphate)lysine. Arg-247 is a pyridoxal 5'-phosphate binding site. Arg-366 serves as a coordination point for substrate.

This sequence belongs to the class-I pyridoxal-phosphate-dependent aminotransferase family. LL-diaminopimelate aminotransferase subfamily. Homodimer. It depends on pyridoxal 5'-phosphate as a cofactor.

The enzyme catalyses (2S,6S)-2,6-diaminopimelate + 2-oxoglutarate = (S)-2,3,4,5-tetrahydrodipicolinate + L-glutamate + H2O + H(+). It functions in the pathway amino-acid biosynthesis; L-lysine biosynthesis via DAP pathway; LL-2,6-diaminopimelate from (S)-tetrahydrodipicolinate (aminotransferase route): step 1/1. Functionally, involved in the synthesis of meso-diaminopimelate (m-DAP or DL-DAP), required for both lysine and peptidoglycan biosynthesis. Catalyzes the direct conversion of tetrahydrodipicolinate to LL-diaminopimelate. Can also use m-DAP instead of LL-DAP as the amino-group donor. This chain is LL-diaminopimelate aminotransferase, found in Gloeobacter violaceus (strain ATCC 29082 / PCC 7421).